A 255-amino-acid polypeptide reads, in one-letter code: 5-oxoprolinase subunit A (255 aa).

Belongs to the LamB/PxpA family. In terms of assembly, forms a complex composed of PxpA, PxpB and PxpC.

The enzyme catalyses 5-oxo-L-proline + ATP + 2 H2O = L-glutamate + ADP + phosphate + H(+). Functionally, catalyzes the cleavage of 5-oxoproline to form L-glutamate coupled to the hydrolysis of ATP to ADP and inorganic phosphate. The chain is 5-oxoprolinase subunit A from Rhodopseudomonas palustris (strain BisB18).